Reading from the N-terminus, the 147-residue chain is Large ribosomal subunit protein bL9 (147 aa).

It belongs to the bacterial ribosomal protein bL9 family.

In terms of biological role, binds to the 23S rRNA. This is Large ribosomal subunit protein bL9 from Clostridium novyi (strain NT).